Reading from the N-terminus, the 499-residue chain is Tektin-like protein 1 (499 aa).

2 coiled-coil regions span residues 197–227 (SMLTWEKEELKSMKRKMERDMEKSEVLLKTL) and 297–317 (LNEAKRLLVESKDTLVEMAKN). A Phosphotyrosine modification is found at Tyr372.

As to quaternary structure, microtubule inner protein component of sperm flagellar doublet microtubules.

The protein localises to the cytoplasm. It localises to the cytoskeleton. It is found in the flagellum axoneme. In terms of biological role, microtubule inner protein (MIP) part of the dynein-decorated doublet microtubules (DMTs) in sperm flagellar axoneme, which is required for motile flagellum beating. Forms an extensive interaction network cross-linking the lumen of axonemal doublet microtubules. The sequence is that of Tektin-like protein 1 from Homo sapiens (Human).